The sequence spans 252 residues: MSKDKVTVITSPSTEELVSLVNSALLEEAMLTIFARCKVHYDGRAKSELGSGDRVIIVKPDGSFLIHQSKKREPVNWQPPGSRVRLELRENPVLVSIRRKPRETLEVELEEVYMVSVFRAEDYEELALTGSEAEMAELIFENPEVIEPGFKPLFREKAIGTGIVDVLGRDSDGNIVVLELKRRRAELHAVRQLKSYVEILREEYGDKVRGILVAPSLTSGAKRLLEKEGLEFRKLEPPKRDSKKKGRQKTLF.

Belongs to the NucS endonuclease family.

Its subcellular location is the cytoplasm. Its function is as follows. Cleaves both 3' and 5' ssDNA extremities of branched DNA structures. In Thermococcus kodakarensis (strain ATCC BAA-918 / JCM 12380 / KOD1) (Pyrococcus kodakaraensis (strain KOD1)), this protein is Endonuclease NucS.